The following is a 202-amino-acid chain: Arenicin-2 (202 aa).

Residues Met1 to Cys25 form the signal peptide. Positions Asp26–Arg181 are excised as a propeptide. The 96-residue stretch at Gly73–Leu168 folds into the BRICHOS domain. Disulfide bonds link Cys100-Cys160 and Cys184-Cys201.

Has antimicrobial activity against the Gram-negative bacteria E.coli and P.mirabilis, the Gram-positive bacterium L.monocytogenes and the yeast C.albicans. The sequence is that of Arenicin-2 from Arenicola marina (Lugworm).